A 250-amino-acid chain; its full sequence is Peptidyl-tRNA hydrolase (250 aa).

Tyr-14 contributes to the tRNA binding site. His-19 serves as the catalytic Proton acceptor. Positions 64, 66, and 112 each coordinate tRNA. The disordered stretch occupies residues 192–250 (MGDGNQRPGGVKTDPAQLEKAPPKAQSHIRQARQNQKKPNIPESGPMAEMLKKLLGKKD). Over residues 219–229 (HIRQARQNQKK) the composition is skewed to polar residues. The segment covering 241 to 250 (MLKKLLGKKD) has biased composition (basic and acidic residues).

It belongs to the PTH family. Monomer.

The protein resides in the cytoplasm. The catalysed reaction is an N-acyl-L-alpha-aminoacyl-tRNA + H2O = an N-acyl-L-amino acid + a tRNA + H(+). Its function is as follows. Hydrolyzes ribosome-free peptidyl-tRNAs (with 1 or more amino acids incorporated), which drop off the ribosome during protein synthesis, or as a result of ribosome stalling. Catalyzes the release of premature peptidyl moieties from peptidyl-tRNA molecules trapped in stalled 50S ribosomal subunits, and thus maintains levels of free tRNAs and 50S ribosomes. This chain is Peptidyl-tRNA hydrolase, found in Brucella suis (strain ATCC 23445 / NCTC 10510).